Here is a 196-residue protein sequence, read N- to C-terminus: UPF0340 protein TT_C0214 (196 aa).

The protein belongs to the UPF0340 family.

The protein is UPF0340 protein TT_C0214 of Thermus thermophilus (strain ATCC BAA-163 / DSM 7039 / HB27).